Consider the following 257-residue polypeptide: UPF0246 protein YaaA (257 aa).

Belongs to the UPF0246 family.

This Salmonella arizonae (strain ATCC BAA-731 / CDC346-86 / RSK2980) protein is UPF0246 protein YaaA.